A 306-amino-acid chain; its full sequence is Large ribosomal subunit protein mL45 (306 aa).

The protein belongs to the mitochondrion-specific ribosomal protein mL45 family. As to quaternary structure, component of the mitochondrial ribosome large subunit (39S) which comprises a 16S rRNA and about 50 distinct proteins.

It localises to the mitochondrion. Functionally, component of the mitochondrial large ribosomal subunit (mt-LSU). Within the mitochondrial ribosomes, required to direct the nascent polypeptide toward the tunnel exit and position the exit at a distance from the membrane surface. This is Large ribosomal subunit protein mL45 (MRPL45) from Bos taurus (Bovine).